The primary structure comprises 249 residues: Small ribosomal subunit protein uS5 (249 aa).

A compositionally biased stretch (basic and acidic residues) spans 1–14 (MSAEAPKRQFGDRR). Positions 1–29 (MSAEAPKRQFGDRRRGGRRGGRRDGEEKG) are disordered. The S5 DRBM domain occupies 71-134 (LKDDVMKIRS…VIAKLSIIPI (64 aa)).

The protein belongs to the universal ribosomal protein uS5 family. As to quaternary structure, component of the small ribosomal subunit. Mature ribosomes consist of a small (40S) and a large (60S) subunit. The 40S subunit contains about 32 different proteins and 1 molecule of RNA (18S). The 60S subunit contains 45 different proteins and 3 molecules of RNA (25S, 5.8S and 5S).

It localises to the cytoplasm. Its function is as follows. Component of the ribosome, a large ribonucleoprotein complex responsible for the synthesis of proteins in the cell. The small ribosomal subunit (SSU) binds messenger RNAs (mRNAs) and translates the encoded message by selecting cognate aminoacyl-transfer RNA (tRNA) molecules. The large subunit (LSU) contains the ribosomal catalytic site termed the peptidyl transferase center (PTC), which catalyzes the formation of peptide bonds, thereby polymerizing the amino acids delivered by tRNAs into a polypeptide chain. The nascent polypeptides leave the ribosome through a tunnel in the LSU and interact with protein factors that function in enzymatic processing, targeting, and the membrane insertion of nascent chains at the exit of the ribosomal tunnel. RPS2 is important for the assembly and function of the 40S ribosomal subunitand is nvolved in nucleolar processing of pre-18S ribosomal RNA and ribosome assembly. The polypeptide is Small ribosomal subunit protein uS5 (RPS21) (Candida albicans (strain SC5314 / ATCC MYA-2876) (Yeast)).